The primary structure comprises 500 residues: Cytochrome P450 2D14 (500 aa).

Position 446 (C446) interacts with heme.

The protein belongs to the cytochrome P450 family. Heme is required as a cofactor.

The protein localises to the endoplasmic reticulum membrane. It is found in the microsome membrane. The catalysed reaction is an organic molecule + reduced [NADPH--hemoprotein reductase] + O2 = an alcohol + oxidized [NADPH--hemoprotein reductase] + H2O + H(+). Its function is as follows. Cytochromes P450 are a group of heme-thiolate monooxygenases. In liver microsomes, this enzyme is involved in an NADPH-dependent electron transport pathway. It oxidizes a variety of structurally unrelated compounds, including steroids, fatty acids, and xenobiotics. This Bos taurus (Bovine) protein is Cytochrome P450 2D14 (CYP2D14).